The sequence spans 193 residues: Superoxide dismutase [Fe] (193 aa).

Residues His27, His74, Asp157, and His161 each contribute to the Fe cation site.

This sequence belongs to the iron/manganese superoxide dismutase family. As to quaternary structure, homodimer. Fe cation is required as a cofactor.

The enzyme catalyses 2 superoxide + 2 H(+) = H2O2 + O2. In terms of biological role, destroys superoxide anion radicals which are normally produced within the cells and which are toxic to biological systems. Partially complements double sodA-sodB deletions in E.coli. The chain is Superoxide dismutase [Fe] from Pseudomonas aeruginosa (strain ATCC 15692 / DSM 22644 / CIP 104116 / JCM 14847 / LMG 12228 / 1C / PRS 101 / PAO1).